Consider the following 303-residue polypeptide: Terpene synthase (303 aa).

Positions 69 and 73 each coordinate Mg(2+). A DDXXD motif motif is present at residues 69–73 (DDIQD).

It belongs to the FPP/GGPP synthase family. The cofactor is Mg(2+).

The catalysed reaction is (2E)-geranyl diphosphate + H2O = (2E)-geraniol + diphosphate. Terpene synthase that is able to convert geraniol diphosphate to geraniol in tea leaves. This Matsumurasca onukii (Tea green leafhopper) protein is Terpene synthase.